A 461-amino-acid polypeptide reads, in one-letter code: ATP-dependent protease ATPase subunit HslU (461 aa).

ATP-binding positions include Ile18, 60 to 65 (GVGKTE), Asp274, Glu339, and Arg411.

Belongs to the ClpX chaperone family. HslU subfamily. A double ring-shaped homohexamer of HslV is capped on each side by a ring-shaped HslU homohexamer. The assembly of the HslU/HslV complex is dependent on binding of ATP.

Its subcellular location is the cytoplasm. Functionally, ATPase subunit of a proteasome-like degradation complex; this subunit has chaperone activity. The binding of ATP and its subsequent hydrolysis by HslU are essential for unfolding of protein substrates subsequently hydrolyzed by HslV. HslU recognizes the N-terminal part of its protein substrates and unfolds these before they are guided to HslV for hydrolysis. This is ATP-dependent protease ATPase subunit HslU from Carboxydothermus hydrogenoformans (strain ATCC BAA-161 / DSM 6008 / Z-2901).